Reading from the N-terminus, the 227-residue chain is Fibrillarin-like rRNA/tRNA 2'-O-methyltransferase (227 aa).

S-adenosyl-L-methionine-binding positions include 86–87 (TT), 105–106 (EF), 130–131 (DA), and 150–153 (DVAQ).

This sequence belongs to the methyltransferase superfamily. Fibrillarin family. As to quaternary structure, interacts with nop5. Component of box C/D small ribonucleoprotein (sRNP) particles that contain rpl7ae, FlpA and nop5, plus a guide RNA.

Functionally, involved in pre-rRNA and tRNA processing. Utilizes the methyl donor S-adenosyl-L-methionine to catalyze the site-specific 2'-hydroxyl methylation of ribose moieties in rRNA and tRNA. Site specificity is provided by a guide RNA that base pairs with the substrate. Methylation occurs at a characteristic distance from the sequence involved in base pairing with the guide RNA. In Pyrococcus abyssi (strain GE5 / Orsay), this protein is Fibrillarin-like rRNA/tRNA 2'-O-methyltransferase.